Here is a 220-residue protein sequence, read N- to C-terminus: MKFEKYIDHTLLKPESTRTQIDQIIDEAKAYNFKSVCVNPTHVKYAAERLADSEVLVCTVIGFPLGASTTATKAFETEDAIQNGADEIDMVINIGALKDGRFDDVQQDIEAVVKAAKGHTVKVIIETILLDHDEIVKASELTKAAGADFVKTSTGFAGGGATAEDVKLMKDTVGADVEVKASGGVRNLEDFNKMVEAGATRIGASAGVQIMQGLEADSDY.

Residue D89 is the Proton donor/acceptor of the active site. K151 acts as the Schiff-base intermediate with acetaldehyde in catalysis. K180 functions as the Proton donor/acceptor in the catalytic mechanism.

This sequence belongs to the DeoC/FbaB aldolase family. DeoC type 1 subfamily.

The protein resides in the cytoplasm. The enzyme catalyses 2-deoxy-D-ribose 5-phosphate = D-glyceraldehyde 3-phosphate + acetaldehyde. It participates in carbohydrate degradation; 2-deoxy-D-ribose 1-phosphate degradation; D-glyceraldehyde 3-phosphate and acetaldehyde from 2-deoxy-alpha-D-ribose 1-phosphate: step 2/2. Functionally, catalyzes a reversible aldol reaction between acetaldehyde and D-glyceraldehyde 3-phosphate to generate 2-deoxy-D-ribose 5-phosphate. This chain is Deoxyribose-phosphate aldolase 1, found in Staphylococcus aureus (strain bovine RF122 / ET3-1).